The primary structure comprises 465 residues: ATP synthase subunit beta (465 aa).

Residue 152-159 (GGAGVGKT) coordinates ATP.

Belongs to the ATPase alpha/beta chains family. As to quaternary structure, F-type ATPases have 2 components, CF(1) - the catalytic core - and CF(0) - the membrane proton channel. CF(1) has five subunits: alpha(3), beta(3), gamma(1), delta(1), epsilon(1). CF(0) has three main subunits: a(1), b(2) and c(9-12). The alpha and beta chains form an alternating ring which encloses part of the gamma chain. CF(1) is attached to CF(0) by a central stalk formed by the gamma and epsilon chains, while a peripheral stalk is formed by the delta and b chains.

The protein resides in the cell inner membrane. It carries out the reaction ATP + H2O + 4 H(+)(in) = ADP + phosphate + 5 H(+)(out). Produces ATP from ADP in the presence of a proton gradient across the membrane. The catalytic sites are hosted primarily by the beta subunits. This is ATP synthase subunit beta from Campylobacter curvus (strain 525.92).